The sequence spans 230 residues: Urease accessory protein UreE (230 aa).

Residues 197-230 are disordered; it reads LHIHAIHSHGDGDSHNHDHDHSHSHGDHDHDHKH. Residues 204–230 show a composition bias toward basic and acidic residues; it reads SHGDGDSHNHDHDHSHSHGDHDHDHKH.

It belongs to the UreE family.

It localises to the cytoplasm. Functionally, involved in urease metallocenter assembly. Binds nickel. Probably functions as a nickel donor during metallocenter assembly. The sequence is that of Urease accessory protein UreE from Yersinia aldovae.